Here is a 179-residue protein sequence, read N- to C-terminus: Ribosome maturation factor RimM (179 aa).

Residues 102-179 enclose the PRC barrel domain; that stretch reads DGEYYWYQLE…EMKVDWDADF (78 aa).

The protein belongs to the RimM family. In terms of assembly, binds ribosomal protein uS19.

The protein localises to the cytoplasm. Its function is as follows. An accessory protein needed during the final step in the assembly of 30S ribosomal subunit, possibly for assembly of the head region. Essential for efficient processing of 16S rRNA. May be needed both before and after RbfA during the maturation of 16S rRNA. It has affinity for free ribosomal 30S subunits but not for 70S ribosomes. In Pseudomonas syringae pv. syringae (strain B728a), this protein is Ribosome maturation factor RimM.